Reading from the N-terminus, the 273-residue chain is Neuferricin (273 aa).

A signal peptide spans 1-22; it reads MLGYLAAAALCLAAVLLMRLDH. One can recognise a Cytochrome b5 heme-binding domain in the interval 44–143; it reads GRLMSKEELS…QNYITIGKLT (100 aa).

It belongs to the cytochrome b5 family. MAPR subfamily.

The protein resides in the secreted. In terms of biological role, heme-binding protein which promotes neuronal but not astrocyte differentiation. This Xenopus tropicalis (Western clawed frog) protein is Neuferricin (cyb5d2).